The primary structure comprises 122 residues: MARIAGVDLPREKRVEIALTYIYGIGLSTSQKILSTTGISPDARVKDLSEDEVNEIRTYINKNLMVEGDLRRDVALNIKRLVEIGSYRGIRHRRGLPVRGQKTKTNARTRKGPKKTMANKKK.

A disordered region spans residues 93–122 (RRGLPVRGQKTKTNARTRKGPKKTMANKKK).

Belongs to the universal ribosomal protein uS13 family. In terms of assembly, part of the 30S ribosomal subunit. Forms a loose heterodimer with protein S19. Forms two bridges to the 50S subunit in the 70S ribosome.

Functionally, located at the top of the head of the 30S subunit, it contacts several helices of the 16S rRNA. In the 70S ribosome it contacts the 23S rRNA (bridge B1a) and protein L5 of the 50S subunit (bridge B1b), connecting the 2 subunits; these bridges are implicated in subunit movement. Contacts the tRNAs in the A and P-sites. The chain is Small ribosomal subunit protein uS13 from Clostridium botulinum (strain Alaska E43 / Type E3).